The primary structure comprises 334 residues: Meso-diaminopimelate D-dehydrogenase (334 aa).

NADP(+) is bound by residues 16–19 (YGNL), 40–42 (TRR), 75–78 (CSGS), 98–100 (GFD), and 127–131 (CGWDP). Substrate contacts are provided by residues Asp100, Asp130, Trp154, 160-161 (QG), Thr179, Arg205, His255, and Asn284.

It belongs to the diaminopimelate dehydrogenase family. In terms of assembly, homodimer.

It carries out the reaction meso-2,6-diaminopimelate + NADP(+) + H2O = (S)-2-amino-6-oxoheptanedioate + NH4(+) + NADPH + H(+). It functions in the pathway amino-acid biosynthesis; L-lysine biosynthesis via DAP pathway; DL-2,6-diaminopimelate from (S)-tetrahydrodipicolinate: step 1/1. Functionally, catalyzes the reversible NADPH-dependent reductive amination of L-2-amino-6-oxopimelate, the acyclic form of L-tetrahydrodipicolinate, to generate the meso compound, D,L-2,6-diaminopimelate. Probably plays a role in lysine biosynthesis. Exhibits a high substrate specificity for meso-2,6-diaminopimelate (m-DAP), since the activity with L,L-2,6-diaminopimelate is less than 5% of the activity observed with m-DAP. Can use NAD(+) only very poorly since the activity observed in the presence of NAD(+) is about 0.3% of that with NADP(+). In Acetivibrio thermocellus (strain ATCC 27405 / DSM 1237 / JCM 9322 / NBRC 103400 / NCIMB 10682 / NRRL B-4536 / VPI 7372) (Clostridium thermocellum), this protein is Meso-diaminopimelate D-dehydrogenase (ddh).